The sequence spans 231 residues: 7-cyano-7-deazaguanine synthase (231 aa).

Position 8–18 (8–18 (FSGGQDSTTCL)) interacts with ATP. Zn(2+) contacts are provided by C188, C197, C200, and C203.

It belongs to the QueC family. Zn(2+) serves as cofactor.

It catalyses the reaction 7-carboxy-7-deazaguanine + NH4(+) + ATP = 7-cyano-7-deazaguanine + ADP + phosphate + H2O + H(+). The protein operates within purine metabolism; 7-cyano-7-deazaguanine biosynthesis. Catalyzes the ATP-dependent conversion of 7-carboxy-7-deazaguanine (CDG) to 7-cyano-7-deazaguanine (preQ(0)). This is 7-cyano-7-deazaguanine synthase from Shigella flexneri serotype 5b (strain 8401).